Consider the following 526-residue polypeptide: MKSSVEKLSATRTKLTIEVPFEELKPEFDKAYATLAQQVNMPGFRKGKVPAKILEARLGRGVVLDQVINEMLPSRYSQAVEENDVKALGQPEIEIAELEDGKHITFTAEVDVRPEIEVPDFSAISVEVAPLKADDEAIDAELKNLQARFGTLKPADRAVKKGDFVSIDLSATIDGETVDEATTEGLSHEVGNDSLIEGLDDALVGMKEGEESTFTSKLVAGEHADEEAEVTVKLGSVKERELPELDDDFAQLASEFDTLDELKESLKGQVEQQLKNTQAGEIRDKVLAEALEQTEFELPEGVVKEQVDAQIQQIIQQFGGDEKVFESMLAAQDMTREKFEEDARSSAEDSVRTQLFLDAVADKEQPEVSQEELMDHIAFTANQYGMDPNQFIMQLQQAGQLGSLFADVRRGKALALNIARTSVKDTDGADVDPKEYFGDVEAEGDKADKAETDKAEEKPKKAPAKKSTTKKSTAKKSTAKKSTAKKSTAKKSTAKKSTTKKATKSTAKKSTAKKTTAKKAAEKKED.

Positions 162 to 243 constitute a PPIase FKBP-type domain; it reads GDFVSIDLSA…LGSVKERELP (82 aa). The segment covering 425-460 has biased composition (basic and acidic residues); it reads DTDGADVDPKEYFGDVEAEGDKADKAETDKAEEKPK. Residues 425-526 form a disordered region; it reads DTDGADVDPK…AKKAAEKKED (102 aa). Positions 461–517 are enriched in basic residues; that stretch reads KAPAKKSTTKKSTAKKSTAKKSTAKKSTAKKSTAKKSTTKKATKSTAKKSTAKKTTA.

This sequence belongs to the FKBP-type PPIase family. Tig subfamily.

The protein resides in the cytoplasm. It catalyses the reaction [protein]-peptidylproline (omega=180) = [protein]-peptidylproline (omega=0). Functionally, involved in protein export. Acts as a chaperone by maintaining the newly synthesized protein in an open conformation. Functions as a peptidyl-prolyl cis-trans isomerase. This Corynebacterium jeikeium (strain K411) protein is Trigger factor.